We begin with the raw amino-acid sequence, 317 residues long: MTTQLDSLRNMTVVVADTGDIDAIKKYQPQDATTNPSLILSASALPQYAPLIDEAIAYAKAQSANKAQQLIDAEDKLAVNIGLEILKIVPGRISTEVDARLSYDTQATVEKARKLIALYNAAGISNDRILIKIASTWQGIRAAEILEKEGINCNLTLLFSEAQARACAEAGVYLISPFVGRILDWYKANSDKKEYAPAEDPGVISVTKIYNYYKEYGYNTVVMGASFRNVGEITELAGCDRLTIAPALLKELQENSTALVRKLEYKGEVKAKPQPLTEAEFYWQHNSDAMAVEKLAEGIRKFAVDQEKLETMLSAKL.

Lys132 serves as the catalytic Schiff-base intermediate with substrate.

The protein belongs to the transaldolase family. Type 1 subfamily. Homodimer.

It is found in the cytoplasm. The enzyme catalyses D-sedoheptulose 7-phosphate + D-glyceraldehyde 3-phosphate = D-erythrose 4-phosphate + beta-D-fructose 6-phosphate. It participates in carbohydrate degradation; pentose phosphate pathway; D-glyceraldehyde 3-phosphate and beta-D-fructose 6-phosphate from D-ribose 5-phosphate and D-xylulose 5-phosphate (non-oxidative stage): step 2/3. Transaldolase is important for the balance of metabolites in the pentose-phosphate pathway. The sequence is that of Transaldolase from Haemophilus influenzae (strain PittGG).